Consider the following 390-residue polypeptide: uncharacterized protein (390 aa).

Helical transmembrane passes span 10 to 30 (LSFC…LPIL), 43 to 63 (FLIG…QIPF), 81 to 101 (FMFF…GLII), 134 to 154 (AIGV…PIIV), 162 to 182 (IFWI…FFVP), 213 to 233 (FYLG…MIPN), 246 to 266 (WKVY…FIFY), 272 to 292 (ILEN…IIFL), 298 to 318 (LLFL…LEVF), 341 to 361 (TSQF…YSFL), and 363 to 383 (FSQI…FSFF).

Belongs to the major facilitator superfamily.

It is found in the cell membrane. This is an uncharacterized protein from Buchnera aphidicola subsp. Acyrthosiphon pisum (strain APS) (Acyrthosiphon pisum symbiotic bacterium).